A 450-amino-acid chain; its full sequence is tRNA-2-methylthio-N(6)-dimethylallyladenosine synthase (450 aa).

The MTTase N-terminal domain maps to 7–127; the sequence is KKVFIKTYGC…LPDVLARVRG (121 aa). The [4Fe-4S] cluster site is built by Cys16, Cys52, Cys90, Cys168, Cys172, and Cys175. In terms of domain architecture, Radical SAM core spans 154 to 388; it reads IKRGVTAFLT…LLLKQQQGFG (235 aa). The TRAM domain occupies 389-450; that stretch reads SSLVGSTIDT…GYNSLFAELA (62 aa).

It belongs to the methylthiotransferase family. MiaB subfamily. As to quaternary structure, monomer. It depends on [4Fe-4S] cluster as a cofactor.

Its subcellular location is the cytoplasm. The catalysed reaction is N(6)-dimethylallyladenosine(37) in tRNA + (sulfur carrier)-SH + AH2 + 2 S-adenosyl-L-methionine = 2-methylsulfanyl-N(6)-dimethylallyladenosine(37) in tRNA + (sulfur carrier)-H + 5'-deoxyadenosine + L-methionine + A + S-adenosyl-L-homocysteine + 2 H(+). Its function is as follows. Catalyzes the methylthiolation of N6-(dimethylallyl)adenosine (i(6)A), leading to the formation of 2-methylthio-N6-(dimethylallyl)adenosine (ms(2)i(6)A) at position 37 in tRNAs that read codons beginning with uridine. The protein is tRNA-2-methylthio-N(6)-dimethylallyladenosine synthase of Mesorhizobium japonicum (strain LMG 29417 / CECT 9101 / MAFF 303099) (Mesorhizobium loti (strain MAFF 303099)).